A 247-amino-acid polypeptide reads, in one-letter code: 3-deoxy-manno-octulosonate cytidylyltransferase (247 aa).

Belongs to the KdsB family.

The protein localises to the cytoplasm. It carries out the reaction 3-deoxy-alpha-D-manno-oct-2-ulosonate + CTP = CMP-3-deoxy-beta-D-manno-octulosonate + diphosphate. It participates in nucleotide-sugar biosynthesis; CMP-3-deoxy-D-manno-octulosonate biosynthesis; CMP-3-deoxy-D-manno-octulosonate from 3-deoxy-D-manno-octulosonate and CTP: step 1/1. Its pathway is bacterial outer membrane biogenesis; lipopolysaccharide biosynthesis. In terms of biological role, activates KDO (a required 8-carbon sugar) for incorporation into bacterial lipopolysaccharide in Gram-negative bacteria. The protein is 3-deoxy-manno-octulosonate cytidylyltransferase of Methylorubrum extorquens (strain PA1) (Methylobacterium extorquens).